The following is a 547-amino-acid chain: Eukaryotic translation initiation factor 3 subunit D (547 aa).

2 disordered regions span residues 1-22 (MANFVLPPIHDNSDGSWGPSTS) and 114-159 (SVRG…TRDS). The segment covering 126 to 148 (GRGGQRGGFSTRGGRGGARGGYG) has biased composition (gly residues). An RNA gate region spans residues 284 to 298 (PLDYITVNENAADPP).

Belongs to the eIF-3 subunit D family. In terms of assembly, component of the eukaryotic translation initiation factor 3 (eIF-3) complex.

The protein localises to the cytoplasm. MRNA cap-binding component of the eukaryotic translation initiation factor 3 (eIF-3) complex, which is involved in protein synthesis of a specialized repertoire of mRNAs and, together with other initiation factors, stimulates binding of mRNA and methionyl-tRNAi to the 40S ribosome. The eIF-3 complex specifically targets and initiates translation of a subset of mRNAs involved in cell proliferation. In the eIF-3 complex, eif3d specifically recognizes and binds the 7-methylguanosine cap of a subset of mRNAs. This chain is Eukaryotic translation initiation factor 3 subunit D, found in Cryptococcus neoformans var. neoformans serotype D (strain B-3501A) (Filobasidiella neoformans).